The following is a 500-amino-acid chain: Probable cytosol aminopeptidase (500 aa).

Lysine 267 and aspartate 272 together coordinate Mn(2+). The active site involves lysine 279. Residues aspartate 290, aspartate 349, and glutamate 351 each coordinate Mn(2+). The active site involves arginine 353.

The protein belongs to the peptidase M17 family. The cofactor is Mn(2+).

The protein resides in the cytoplasm. It catalyses the reaction Release of an N-terminal amino acid, Xaa-|-Yaa-, in which Xaa is preferably Leu, but may be other amino acids including Pro although not Arg or Lys, and Yaa may be Pro. Amino acid amides and methyl esters are also readily hydrolyzed, but rates on arylamides are exceedingly low.. The enzyme catalyses Release of an N-terminal amino acid, preferentially leucine, but not glutamic or aspartic acids.. In terms of biological role, presumably involved in the processing and regular turnover of intracellular proteins. Catalyzes the removal of unsubstituted N-terminal amino acids from various peptides. The chain is Probable cytosol aminopeptidase from Tolumonas auensis (strain DSM 9187 / NBRC 110442 / TA 4).